The chain runs to 494 residues: Guanosine-5'-triphosphate,3'-diphosphate pyrophosphatase (494 aa).

The protein belongs to the GppA/Ppx family. GppA subfamily.

It carries out the reaction guanosine 3'-diphosphate 5'-triphosphate + H2O = guanosine 3',5'-bis(diphosphate) + phosphate + H(+). It participates in purine metabolism; ppGpp biosynthesis; ppGpp from GTP: step 2/2. In terms of biological role, catalyzes the conversion of pppGpp to ppGpp. Guanosine pentaphosphate (pppGpp) is a cytoplasmic signaling molecule which together with ppGpp controls the 'stringent response', an adaptive process that allows bacteria to respond to amino acid starvation, resulting in the coordinated regulation of numerous cellular activities. This chain is Guanosine-5'-triphosphate,3'-diphosphate pyrophosphatase, found in Escherichia coli (strain 55989 / EAEC).